Reading from the N-terminus, the 446-residue chain is MQKKYFGTDGIRGKVGNSLINAEFMLKLGWAVGRVLANSHSATVLIGKDTRISGYMIESALQAGLSAAGVNIKLTGPMPTPAIAYLTHSVRADAGIVISASHNHYPDNGVKFFNKDGFKLSDELELAIEKQIDKPMKTVVADRLGKAARMNEAHGRYIEFCKSTFPSNLTLKGLKIVVDCANGAAYAVAPSIFHELGAEVVAIADDPDGFNINQTCGATDTAHLQEMVVKHNADVGIAFDGDGDRLIMVDHHGLRVDGDELLCIMAIDRFYLKENAPLGVVGTIMSNLGLEHTLKRHHIAFERSPVGDRYVLDLMQQKGWFLGGESSGHIVDLGFTTTGDGVITALQILRIMQQAEKPLADLKKVMVKHPQVLINVPIKGILDIAQNPNIKKAITEAEKQLNGAGRILLRPSGTEPVIRVMVEGSDEGIVRQTAEMLAAAVQQSTL.

Residue Ser101 is the Phosphoserine intermediate of the active site. Residues Ser101, Asp240, Asp242, and Asp244 each contribute to the Mg(2+) site. A Phosphoserine modification is found at Ser101.

The protein belongs to the phosphohexose mutase family. The cofactor is Mg(2+). In terms of processing, activated by phosphorylation.

The enzyme catalyses alpha-D-glucosamine 1-phosphate = D-glucosamine 6-phosphate. Functionally, catalyzes the conversion of glucosamine-6-phosphate to glucosamine-1-phosphate. The polypeptide is Phosphoglucosamine mutase (Coxiella burnetii (strain RSA 331 / Henzerling II)).